Consider the following 431-residue polypeptide: tRNA(Ile)-lysidine synthase (431 aa).

Residue 25–30 (SGGLDS) coordinates ATP.

It belongs to the tRNA(Ile)-lysidine synthase family.

The protein localises to the cytoplasm. The catalysed reaction is cytidine(34) in tRNA(Ile2) + L-lysine + ATP = lysidine(34) in tRNA(Ile2) + AMP + diphosphate + H(+). Its function is as follows. Ligates lysine onto the cytidine present at position 34 of the AUA codon-specific tRNA(Ile) that contains the anticodon CAU, in an ATP-dependent manner. Cytidine is converted to lysidine, thus changing the amino acid specificity of the tRNA from methionine to isoleucine. This is tRNA(Ile)-lysidine synthase from Legionella pneumophila (strain Paris).